A 121-amino-acid polypeptide reads, in one-letter code: Large ribosomal subunit protein bL20 (121 aa).

This sequence belongs to the bacterial ribosomal protein bL20 family.

Functionally, binds directly to 23S ribosomal RNA and is necessary for the in vitro assembly process of the 50S ribosomal subunit. It is not involved in the protein synthesizing functions of that subunit. The sequence is that of Large ribosomal subunit protein bL20 from Chlamydia felis (strain Fe/C-56) (Chlamydophila felis).